The primary structure comprises 117 residues: Large ribosomal subunit protein bL20c (117 aa).

This sequence belongs to the bacterial ribosomal protein bL20 family.

It localises to the plastid. The protein resides in the chloroplast. Functionally, binds directly to 23S ribosomal RNA and is necessary for the in vitro assembly process of the 50S ribosomal subunit. It is not involved in the protein synthesizing functions of that subunit. This Manihot esculenta (Cassava) protein is Large ribosomal subunit protein bL20c.